Reading from the N-terminus, the 151-residue chain is Centrin-A (151 aa).

EF-hand domains follow at residues 80–115 (DVYASFEQAFSLFDRDGSGYITFDDLKTVAINLGEA) and 116–151 (RSDSKLYNMIKRADLNGDKKISKIEFIQLLYWKKIY). Ca(2+) contacts are provided by Asp-93, Asp-95, Ser-97, Tyr-99, Asp-104, Asp-129, Asn-131, Asp-133, Lys-135, and Glu-140.

It belongs to the centrin family.

Its subcellular location is the cytoplasm. It is found in the cytoskeleton. The protein localises to the microtubule organizing center. The protein resides in the centrosome. It localises to the nucleus. In terms of biological role, plays a fundamental role in microtubule-organizing center structure and function. The chain is Centrin-A (cenA) from Dictyostelium discoideum (Social amoeba).